The sequence spans 247 residues: UPF0280 protein MMP1236 (247 aa).

Belongs to the UPF0280 family.

The sequence is that of UPF0280 protein MMP1236 from Methanococcus maripaludis (strain DSM 14266 / JCM 13030 / NBRC 101832 / S2 / LL).